We begin with the raw amino-acid sequence, 432 residues long: Transcription factor E2F1 (432 aa).

Disordered stretches follow at residues 39–85 and 98–126; these read DVGA…GRPP and YLAGSSGPFRGRGRHPGKGVKSPGEKSRY. The segment at 65-106 is cyclin A:CDK2 binding; sequence ATPQAPRPAPSAPRPALGRPPVKRRLDLETDHQYLAGSSGPF. Residues 87–189 are interaction with BIRC2/c-IAP1; sequence KRRLDLETDH…KKSKNHIQWL (103 aa). The DNA-binding element occupies 108–192; it reads GRGRHPGKGV…KNHIQWLGSR (85 aa). Lys115, Lys118, and Lys123 each carry N6-acetyllysine. The interval 151–172 is leucine-zipper; the sequence is LNWAAEVLKVQKRRIYDITNVL. A DEF box motif is present at residues 156–192; that stretch reads EVLKVQKRRIYDITNVLEGIQLIAKKSKNHIQWLGSR. Residue Lys183 is modified to N6-methyllysine; by SETD7. A required for interaction with TRIM28 region spans residues 190–377; sequence GSRTMVGIGQ…RLSPLVAADS (188 aa). The segment at 193 to 282 is dimerization; the sequence is TMVGIGQRLE…AVDSAETFQI (90 aa). A disordered region spans residues 297–342; the sequence is PEESAEGISPGRTSYQETSGEDRNADSGTAGPPPSPPSTSPTLDPS. A transactivation region spans residues 363–432; that stretch reads PMEEDRLSPL…DFGDLTPLDF (70 aa). Phosphoserine is present on residues Ser370 and Ser398. Residues 404–421 are RB1 binding; that stretch reads VDYHFGLEEGEGIRDLFD. Phosphothreonine is present on Thr428.

Belongs to the E2F/DP family. As to quaternary structure, component of the DRTF1/E2F transcription factor complex. Forms heterodimers with DP family members. The E2F1 complex binds specifically hypophosphorylated RB1, the interaction represses E2F1-driven transcription. During the cell cycle, RB1 becomes phosphorylated in mid-to-late G1 phase, detaches from the DRTF1/E2F complex, rendering E2F transcriptionally active. Interacts with TRRAP, which probably mediates its interaction with histone acetyltransferase complexes, leading to transcription activation. Binds TOPBP1 and EAPP. Interacts with ARID3A. Interacts with TRIM28; the interaction inhibits E2F1 acetylation through recruiting HDAC1 and represses its transcriptional activity. Interaction with KAT2B; the interaction acetylates E2F1 enhancing its DNA-binding and transcriptional activity. Interacts with BIRC2/c-IAP1 (via BIR domains). The complex TFDP1:E2F1 interacts with CEBPA; the interaction prevents CEBPA binding to target genes promoters and represses its transcriptional activity. Interacts with RRP1B. Interacts with HCFC1. Interacts with KMT2E; the interaction is probably indirect and is mediated via HCFC1. Interacts with DCAF5 and L3MBTL3; the interaction requires methylation at Lys-183 and is necessary to target E2F1 for ubiquitination by the CRL4-DCAF5 E3 ubiquitin ligase complex. Post-translationally, phosphorylated by CDK2 and cyclin A-CDK2 in the S-phase. Phosphorylation by CHEK2 stabilizes E2F1 upon DNA damage and regulates its effect on transcription and apoptosis. Phosphorylation at Ser-398 by GSK3B promotes interaction with USP11, leading to its deubiquitination and stabilization. Ubiquitinated via 'Lys-63'-linked ubiquitin, leading to its degradation. Deubiquitinated by USP11 following phosphorylation by GSK3B, promoting its stability. In terms of processing, acetylation stimulates DNA-binding. Enhanced under stress conditions such as DNA damage and inhibited by retinoblastoma protein RB1. Regulated by KAP1/TRIM28 which recruits HDAC1 to E2F1 resulting in deacetylation. Post-translationally, methylation at Lys-183 by SETD7 promotes E2F1 ubiquitin-dependent proteasomal degradation.

It is found in the nucleus. With respect to regulation, BIRC2/c-IAP1 stimulates its transcriptional activity. Transcription activator that binds DNA cooperatively with DP proteins through the E2 recognition site, 5'-TTTC[CG]CGC-3' found in the promoter region of a number of genes whose products are involved in cell cycle regulation or in DNA replication. The DRTF1/E2F complex functions in the control of cell-cycle progression from G1 to S phase. E2F1 binds preferentially RB1 in a cell-cycle dependent manner. It can mediate both cell proliferation and TP53/p53-dependent apoptosis. Blocks adipocyte differentiation by binding to specific promoters repressing CEBPA binding to its target gene promoters. Directly activates transcription of PEG10. Positively regulates transcription of RRP1B. The sequence is that of Transcription factor E2F1 from Rattus norvegicus (Rat).